The following is a 183-amino-acid chain: Chromophore lyase CpcT/CpeT 4 (183 aa).

This sequence belongs to the CpcT/CpeT biliprotein lyase family.

Covalently attaches a chromophore to Cys residue(s) of phycobiliproteins. This chain is Chromophore lyase CpcT/CpeT 4, found in Gloeobacter violaceus (strain ATCC 29082 / PCC 7421).